The following is a 399-amino-acid chain: Sex hormone-binding globulin (399 aa).

The first 29 residues, 1–29, serve as a signal peptide directing secretion; it reads MENRDSVASLLLLLLLLPPPHTHQGQVLR. Laminin G-like domains follow at residues 43–214 and 221–387; these read RYLS…LGNC and GLFF…THSC. The N-linked (GlcNAc...) asparagine glycan is linked to Asn160. A disulfide bridge links Cys191 with Cys214. Asn270, Asn353, Asn377, and Asn393 each carry an N-linked (GlcNAc...) asparagine glycan. Cys359 and Cys387 are disulfide-bonded.

Homodimer. In terms of processing, differentially glycosylated in liver (SHBG) and testis (ABP).

The protein localises to the secreted. Its function is as follows. Functions as an androgen transport protein, but may also be involved in receptor mediated processes. Each dimer binds one molecule of steroid. Specific for 5-alpha-dihydrotestosterone, testosterone, and 17-beta-estradiol. Regulates the plasma metabolic clearance rate of steroid hormones by controlling their plasma concentration. The polypeptide is Sex hormone-binding globulin (SHBG) (Phodopus sungorus (Striped hairy-footed hamster)).